The primary structure comprises 335 residues: 3-isopropylmalate dehydrogenase (335 aa).

Arginine 87, arginine 97, arginine 121, and aspartate 211 together coordinate substrate. Mg(2+) contacts are provided by aspartate 211, aspartate 235, and aspartate 239. 271-283 (GSAPDIAGQSKAD) provides a ligand contact to NAD(+).

It belongs to the isocitrate and isopropylmalate dehydrogenases family. LeuB type 2 subfamily. As to quaternary structure, homodimer. Mg(2+) is required as a cofactor. Requires Mn(2+) as cofactor.

It is found in the cytoplasm. It catalyses the reaction (2R,3S)-3-isopropylmalate + NAD(+) = 4-methyl-2-oxopentanoate + CO2 + NADH. Its pathway is amino-acid biosynthesis; L-leucine biosynthesis; L-leucine from 3-methyl-2-oxobutanoate: step 3/4. Functionally, catalyzes the oxidation of 3-carboxy-2-hydroxy-4-methylpentanoate (3-isopropylmalate) to 3-carboxy-4-methyl-2-oxopentanoate. The product decarboxylates to 4-methyl-2 oxopentanoate. This Nocardia farcinica (strain IFM 10152) protein is 3-isopropylmalate dehydrogenase.